Here is a 525-residue protein sequence, read N- to C-terminus: Eukaryotic translation initiation factor 3 subunit L (525 aa).

Residues 1-19 are compositionally biased toward acidic residues; that stretch reads MYTQADEYDGGDAGYEDDY. Residues 1–21 are disordered; it reads MYTQADEYDGGDAGYEDDYSG. The PCI domain maps to 296–502; sequence DAIRCFSSVL…IHIADTKVDR (207 aa).

It belongs to the eIF-3 subunit L family. As to quaternary structure, component of the eukaryotic translation initiation factor 3 (eIF-3) complex.

It is found in the cytoplasm. Component of the eukaryotic translation initiation factor 3 (eIF-3) complex, which is involved in protein synthesis of a specialized repertoire of mRNAs and, together with other initiation factors, stimulates binding of mRNA and methionyl-tRNAi to the 40S ribosome. The eIF-3 complex specifically targets and initiates translation of a subset of mRNAs involved in cell proliferation. The protein is Eukaryotic translation initiation factor 3 subunit L of Nematostella vectensis (Starlet sea anemone).